Reading from the N-terminus, the 615-residue chain is Elongation factor 4 (615 aa).

Residues Gln-14–Thr-200 form the tr-type G domain. Residues Asp-26 to Thr-31 and Asn-147 to Asp-150 contribute to the GTP site.

The protein belongs to the TRAFAC class translation factor GTPase superfamily. Classic translation factor GTPase family. LepA subfamily.

The protein localises to the cell membrane. It catalyses the reaction GTP + H2O = GDP + phosphate + H(+). Functionally, required for accurate and efficient protein synthesis under certain stress conditions. May act as a fidelity factor of the translation reaction, by catalyzing a one-codon backward translocation of tRNAs on improperly translocated ribosomes. Back-translocation proceeds from a post-translocation (POST) complex to a pre-translocation (PRE) complex, thus giving elongation factor G a second chance to translocate the tRNAs correctly. Binds to ribosomes in a GTP-dependent manner. This Corynebacterium diphtheriae (strain ATCC 700971 / NCTC 13129 / Biotype gravis) protein is Elongation factor 4.